An 86-amino-acid polypeptide reads, in one-letter code: Cell division topological specificity factor (86 aa).

The protein belongs to the MinE family.

In terms of biological role, prevents the cell division inhibition by proteins MinC and MinD at internal division sites while permitting inhibition at polar sites. This ensures cell division at the proper site by restricting the formation of a division septum at the midpoint of the long axis of the cell. The polypeptide is Cell division topological specificity factor (Shewanella sediminis (strain HAW-EB3)).